Consider the following 688-residue polypeptide: MARQYPLEKFRNFGIMAHIDAGKTTTTERILFYTGRNHKIGETHDGASTMDWMAQEQERGITITSAATTCFWKGYELNIIDTPGHVDFTVEVERSLRVLDGAVTVLDAKSGVEPQTETVWRQADKYGVPRMIYVNKMDATGADYYNCINTVRERLQANAVAIQIPIGQEDQFQGMVDLLTNQAIIFKDDLGKDIEVGEVPADLADKAEEYRAAMIEAIAETDEELMMKYLEGEELTLEELKVALRKATINNEIIPVICGSSYKNKGVQQMIDGVVDYLPSPLDIPAVKGTNLDGEEEVREASDDAPMSALAFKIATDPFVGRLAFTRVYSGVLESGSYVLNSTKGKKERIGRLVKMHANSREEVESLEAAELGAVIGLKNTTTGDTLCTEAAPIILEKMEFPEPVISIAIEPKTKAGQEKMGIALSKLAEEDPTFKTWTDQETGQTIIAGMGELHLDIIVDRLQREFKVECNVGAPQVAYKETIKKAVEAEAKFARQSGGRGQYGHCKIEMIPTEGEYEFENAIVGGAIPREYIPAVDNGIREAAESGIIAGYPVINFKIRLFDGSYHDVDSSEMAFKIAGSMAFKNAMAKADAVLLEPIMKVEITVPEEYMGDVIGDVNSRRGRMEGMDSRNGAQIIRAFIPLSEMFGYATALRSRTQGRGTYAMEFDHYDDVPKSIQEEVAGKKNK.

Positions 8-282 (EKFRNFGIMA…GVVDYLPSPL (275 aa)) constitute a tr-type G domain. Residues 17–24 (AHIDAGKT), 81–85 (DTPGH), and 135–138 (NKMD) contribute to the GTP site.

This sequence belongs to the TRAFAC class translation factor GTPase superfamily. Classic translation factor GTPase family. EF-G/EF-2 subfamily.

Its subcellular location is the cytoplasm. Catalyzes the GTP-dependent ribosomal translocation step during translation elongation. During this step, the ribosome changes from the pre-translocational (PRE) to the post-translocational (POST) state as the newly formed A-site-bound peptidyl-tRNA and P-site-bound deacylated tRNA move to the P and E sites, respectively. Catalyzes the coordinated movement of the two tRNA molecules, the mRNA and conformational changes in the ribosome. This chain is Elongation factor G, found in Clostridium perfringens (strain 13 / Type A).